A 328-amino-acid chain; its full sequence is Phosphatidylglycerol--prolipoprotein diacylglyceryl transferase (328 aa).

Helical transmembrane passes span 15-35 (VIQG…ILIS), 58-78 (FMFS…TLVY), and 106-126 (GMAI…IINT). Residue Arg156 coordinates a 1,2-diacyl-sn-glycero-3-phospho-(1'-sn-glycerol). 2 helical membrane-spanning segments follow: residues 242–262 (GFIF…IEYL) and 289–309 (ISMG…WVVV).

It belongs to the Lgt family.

Its subcellular location is the cell inner membrane. The catalysed reaction is L-cysteinyl-[prolipoprotein] + a 1,2-diacyl-sn-glycero-3-phospho-(1'-sn-glycerol) = an S-1,2-diacyl-sn-glyceryl-L-cysteinyl-[prolipoprotein] + sn-glycerol 1-phosphate + H(+). The protein operates within protein modification; lipoprotein biosynthesis (diacylglyceryl transfer). In terms of biological role, catalyzes the transfer of the diacylglyceryl group from phosphatidylglycerol to the sulfhydryl group of the N-terminal cysteine of a prolipoprotein, the first step in the formation of mature lipoproteins. The protein is Phosphatidylglycerol--prolipoprotein diacylglyceryl transferase of Borrelia garinii subsp. bavariensis (strain ATCC BAA-2496 / DSM 23469 / PBi) (Borreliella bavariensis).